Here is a 257-residue protein sequence, read N- to C-terminus: 5'-nucleotidase SurE (257 aa).

The a divalent metal cation site is built by D9, D10, S40, and N93.

Belongs to the SurE nucleotidase family. A divalent metal cation is required as a cofactor.

It localises to the cytoplasm. The catalysed reaction is a ribonucleoside 5'-phosphate + H2O = a ribonucleoside + phosphate. Functionally, nucleotidase that shows phosphatase activity on nucleoside 5'-monophosphates. The protein is 5'-nucleotidase SurE of Campylobacter hominis (strain ATCC BAA-381 / DSM 21671 / CCUG 45161 / LMG 19568 / NCTC 13146 / CH001A).